Consider the following 267-residue polypeptide: NAD kinase (267 aa).

Asp45 functions as the Proton acceptor in the catalytic mechanism. NAD(+) is bound by residues 45–46, 121–122, Lys147, Asp149, 160–165, and Ala184; these read DG, NE, and TAYSKS.

The protein belongs to the NAD kinase family. A divalent metal cation is required as a cofactor.

Its subcellular location is the cytoplasm. It catalyses the reaction NAD(+) + ATP = ADP + NADP(+) + H(+). Its function is as follows. Involved in the regulation of the intracellular balance of NAD and NADP, and is a key enzyme in the biosynthesis of NADP. Catalyzes specifically the phosphorylation on 2'-hydroxyl of the adenosine moiety of NAD to yield NADP. The polypeptide is NAD kinase (Lactobacillus gasseri (strain ATCC 33323 / DSM 20243 / BCRC 14619 / CIP 102991 / JCM 1131 / KCTC 3163 / NCIMB 11718 / NCTC 13722 / AM63)).